The primary structure comprises 120 residues: UPF0231 protein YacL (120 aa).

Belongs to the UPF0231 family.

The sequence is that of UPF0231 protein YacL from Salmonella paratyphi A (strain ATCC 9150 / SARB42).